The sequence spans 336 residues: Tetraacyldisaccharide 4'-kinase (336 aa).

60–67 contacts ATP; the sequence is TVGGTGKT.

The protein belongs to the LpxK family.

It carries out the reaction a lipid A disaccharide + ATP = a lipid IVA + ADP + H(+). It participates in glycolipid biosynthesis; lipid IV(A) biosynthesis; lipid IV(A) from (3R)-3-hydroxytetradecanoyl-[acyl-carrier-protein] and UDP-N-acetyl-alpha-D-glucosamine: step 6/6. Its function is as follows. Transfers the gamma-phosphate of ATP to the 4'-position of a tetraacyldisaccharide 1-phosphate intermediate (termed DS-1-P) to form tetraacyldisaccharide 1,4'-bis-phosphate (lipid IVA). The protein is Tetraacyldisaccharide 4'-kinase of Pseudomonas fluorescens (strain SBW25).